The sequence spans 90 residues: Probable Fe(2+)-trafficking protein (90 aa).

It belongs to the Fe(2+)-trafficking protein family. In terms of assembly, monomer.

Could be a mediator in iron transactions between iron acquisition and iron-requiring processes, such as synthesis and/or repair of Fe-S clusters in biosynthetic enzymes. The chain is Probable Fe(2+)-trafficking protein from Yersinia pseudotuberculosis serotype O:1b (strain IP 31758).